A 415-amino-acid polypeptide reads, in one-letter code: F-box protein At3g13820 (415 aa).

Residues 1–50 (MTTMSNLPAEVLEEILSRTPVTSLRTMRSTCKKWNNLSKKKIIPEAARKQ) enclose the F-box domain. Disordered stretches follow at residues 209 to 229 (NDYD…EDDD) and 387 to 415 (KQPK…KIIG). Positions 210–229 (DYDDQEDEEEEDDEEYEDDD) are enriched in acidic residues. Residues 403–415 (NKNKKGRKIKIIG) show a composition bias toward basic residues.

The polypeptide is F-box protein At3g13820 (Arabidopsis thaliana (Mouse-ear cress)).